The chain runs to 69 residues: Ribosome modulation factor (69 aa).

It belongs to the ribosome modulation factor family.

It localises to the cytoplasm. Its function is as follows. During stationary phase, converts 70S ribosomes to an inactive dimeric form (100S ribosomes). The chain is Ribosome modulation factor from Chromohalobacter salexigens (strain ATCC BAA-138 / DSM 3043 / CIP 106854 / NCIMB 13768 / 1H11).